A 196-amino-acid polypeptide reads, in one-letter code: Ribosome maturation factor RimP (196 aa).

Positions 163–196 (GLAPSKPTGPAPKRPKPNTNSSSNEPAAKKPRAE) are disordered.

It belongs to the RimP family.

Its subcellular location is the cytoplasm. Its function is as follows. Required for maturation of 30S ribosomal subunits. This Stenotrophomonas maltophilia (strain K279a) protein is Ribosome maturation factor RimP.